The chain runs to 459 residues: Glycosyl hydrolase family 109 protein 1 (459 aa).

The tat-type signal signal peptide spans 1-31 (MHNIHRRHFLKAAGAVTAGLVTANIALNANA). NAD(+) contacts are provided by residues 64–65 (ER), D86, 135–138 (WEWH), 155–156 (EV), and N184. Substrate contacts are provided by residues Y213, R232, 244–247 (YPTH), and Y326. Y244 is a binding site for NAD(+).

The protein belongs to the Gfo/Idh/MocA family. Glycosyl hydrolase 109 subfamily. NAD(+) serves as cofactor. In terms of processing, predicted to be exported by the Tat system. The position of the signal peptide cleavage has not been experimentally proven.

Its function is as follows. Glycosidase. The chain is Glycosyl hydrolase family 109 protein 1 from Shewanella sp. (strain MR-4).